A 247-amino-acid polypeptide reads, in one-letter code: tRNA pseudouridine synthase A (247 aa).

The Nucleophile role is filled by aspartate 52. Tyrosine 113 is a substrate binding site.

The protein belongs to the tRNA pseudouridine synthase TruA family. As to quaternary structure, homodimer.

The catalysed reaction is uridine(38/39/40) in tRNA = pseudouridine(38/39/40) in tRNA. Formation of pseudouridine at positions 38, 39 and 40 in the anticodon stem and loop of transfer RNAs. The chain is tRNA pseudouridine synthase A from Bartonella tribocorum (strain CIP 105476 / IBS 506).